A 227-amino-acid polypeptide reads, in one-letter code: Cytidylate kinase (227 aa).

10-18 (GPASSGKST) contacts ATP.

This sequence belongs to the cytidylate kinase family. Type 1 subfamily.

Its subcellular location is the cytoplasm. It carries out the reaction CMP + ATP = CDP + ADP. The catalysed reaction is dCMP + ATP = dCDP + ADP. This chain is Cytidylate kinase, found in Streptococcus agalactiae serotype Ia (strain ATCC 27591 / A909 / CDC SS700).